We begin with the raw amino-acid sequence, 493 residues long: MSAVRRVMALASTTLPTKSGLSLWCPSSPSLARRFPARFSPIGSRIASRSLVTASFANENREFVIVGGGNAAGYAARTFVENGMADGRLCIVTKEAYAPYERPALTKAYLFPPEKKPARLPGFHTCVGGGGERQTPDWYKEKGIEVIYEDPVAGADFEKQTLTTDAGKQLKYGSLIIATGCTASRFPDKIGGHLPGVHYIREVADADSLIASLGKAKKIVIVGGGYIGMEVAAAAVAWNLDTTIVFPEDQLLQRLFTPSLAQKYEELYRQNGVKFVKGASINNLEAGSDGRVSAVKLADGSTIEADTVVIGIGAKPAIGPFETLAMNKSIGGIQVDGLFRTSTPGIFAIGDVAAFPLKIYDRMTRVEHVDHARRSAQHCVKSLLTAHTDTYDYLPYFYSRVFEYEGSPRKVWWQFFGDNVGETVEVGNFDPKIATFWIESGRLKGVLVESGSPEEFQLLPKLARSQPLVDKAKLASASSVEEALEIAQAALQS.

The transit peptide at 1 to 51 (MSAVRRVMALASTTLPTKSGLSLWCPSSPSLARRFPARFSPIGSRIASRSL) directs the protein to the chloroplast and mitochondrion. Residues 68–71 (GGNA), Glu95, Arg102, Lys107, and 201–202 (RE) contribute to the FAD site. Residues 224–230 (GGYIGME), Glu248, Arg254, and Gly313 each bind NAD(+). 226 to 230 (YIGME) serves as a coordination point for NADP(+). Positions 254 and 313 each coordinate NADP(+). Asp351 is a binding site for FAD. Residue 367-368 (EH) coordinates NAD(+). 367-368 (EH) contributes to the NADP(+) binding site. Val369 is a binding site for FAD. Arg373 contributes to the L-ascorbate binding site. FAD is bound at residue Tyr398. Tyr398 is an NAD(+) binding site. Tyr398 is an NADP(+) binding site. Arg400 is a binding site for L-ascorbate.

This sequence belongs to the FAD-dependent oxidoreductase family. As to quaternary structure, interacts in vitro with TRXy. Requires FAD as cofactor.

The protein localises to the plastid. It is found in the chloroplast. It localises to the mitochondrion. It catalyses the reaction 2 monodehydro-L-ascorbate radical + NADH + H(+) = 2 L-ascorbate + NAD(+). The enzyme catalyses 2,4,6-trinitrotoluene + NADH = 2,4,6-trinitrotoluene radical + e(-) + NAD(+). Its activity is regulated as follows. Redox regulation of the activity by thioredoxin TRXy1. Catalyzes the conversion of monodehydroascorbate (MDA) to ascorbate, oxidizing NADH in the process. Mediates phytotoxicity of 2,4,6-trinitrotoluene (TNT), an explosive and environmental pollutant, by reducing TNT and forming a nitro radical that spontaneously reacts with atmospheric oxygen, generating reactive superoxide. Can also use 1-chloro-2,4-dinitrobenzene (CDNB) as substrate, but not 1-chloro-4-nitrobenzene (CNB). This chain is Monodehydroascorbate reductase, chloroplastic/mitochondrial, found in Arabidopsis thaliana (Mouse-ear cress).